The primary structure comprises 201 residues: 3-isopropylmalate dehydratase small subunit (201 aa).

This sequence belongs to the LeuD family. LeuD type 1 subfamily. Heterodimer of LeuC and LeuD.

It catalyses the reaction (2R,3S)-3-isopropylmalate = (2S)-2-isopropylmalate. The protein operates within amino-acid biosynthesis; L-leucine biosynthesis; L-leucine from 3-methyl-2-oxobutanoate: step 2/4. Catalyzes the isomerization between 2-isopropylmalate and 3-isopropylmalate, via the formation of 2-isopropylmaleate. The sequence is that of 3-isopropylmalate dehydratase small subunit from Methylorubrum extorquens (strain CM4 / NCIMB 13688) (Methylobacterium extorquens).